Here is a 402-residue protein sequence, read N- to C-terminus: Protein FixF (402 aa).

The polypeptide is Protein FixF (fixF) (Sinorhizobium fredii (strain NBRC 101917 / NGR234)).